The following is a 160-amino-acid chain: Protein CrtK (160 aa).

Helical transmembrane passes span 3–23, 37–57, 76–96, 101–121, and 129–149; these read LTLF…GAIF, WVPP…LMSI, LAFW…FFGL, GGML…VLFW, and LMFV…FSVW.

Belongs to the TspO/BZRP family.

Its subcellular location is the cell inner membrane. It functions in the pathway carotenoid biosynthesis; spheroidene biosynthesis. The sequence is that of Protein CrtK (crtK) from Rhodobacter capsulatus (strain ATCC BAA-309 / NBRC 16581 / SB1003).